Here is a 293-residue protein sequence, read N- to C-terminus: Ribosomal RNA small subunit methyltransferase A (293 aa).

Residues Asn29, Leu31, Gly56, Glu77, Asp102, and Asn127 each contribute to the S-adenosyl-L-methionine site.

Belongs to the class I-like SAM-binding methyltransferase superfamily. rRNA adenine N(6)-methyltransferase family. RsmA subfamily.

The protein localises to the cytoplasm. It catalyses the reaction adenosine(1518)/adenosine(1519) in 16S rRNA + 4 S-adenosyl-L-methionine = N(6)-dimethyladenosine(1518)/N(6)-dimethyladenosine(1519) in 16S rRNA + 4 S-adenosyl-L-homocysteine + 4 H(+). In terms of biological role, specifically dimethylates two adjacent adenosines (A1518 and A1519) in the loop of a conserved hairpin near the 3'-end of 16S rRNA in the 30S particle. May play a critical role in biogenesis of 30S subunits. This chain is Ribosomal RNA small subunit methyltransferase A, found in Geobacillus thermodenitrificans (strain NG80-2).